Reading from the N-terminus, the 95-residue chain is Aspartyl/glutamyl-tRNA(Asn/Gln) amidotransferase subunit C (95 aa).

The protein belongs to the GatC family. In terms of assembly, heterotrimer of A, B and C subunits.

It catalyses the reaction L-glutamyl-tRNA(Gln) + L-glutamine + ATP + H2O = L-glutaminyl-tRNA(Gln) + L-glutamate + ADP + phosphate + H(+). It carries out the reaction L-aspartyl-tRNA(Asn) + L-glutamine + ATP + H2O = L-asparaginyl-tRNA(Asn) + L-glutamate + ADP + phosphate + 2 H(+). Its function is as follows. Allows the formation of correctly charged Asn-tRNA(Asn) or Gln-tRNA(Gln) through the transamidation of misacylated Asp-tRNA(Asn) or Glu-tRNA(Gln) in organisms which lack either or both of asparaginyl-tRNA or glutaminyl-tRNA synthetases. The reaction takes place in the presence of glutamine and ATP through an activated phospho-Asp-tRNA(Asn) or phospho-Glu-tRNA(Gln). In Magnetococcus marinus (strain ATCC BAA-1437 / JCM 17883 / MC-1), this protein is Aspartyl/glutamyl-tRNA(Asn/Gln) amidotransferase subunit C.